Here is a 405-residue protein sequence, read N- to C-terminus: Phosphopentomutase (405 aa).

Mn(2+)-binding residues include aspartate 10, aspartate 303, histidine 308, aspartate 344, histidine 345, and histidine 356.

The protein belongs to the phosphopentomutase family. Requires Mn(2+) as cofactor.

The protein resides in the cytoplasm. The catalysed reaction is 2-deoxy-alpha-D-ribose 1-phosphate = 2-deoxy-D-ribose 5-phosphate. It catalyses the reaction alpha-D-ribose 1-phosphate = D-ribose 5-phosphate. The protein operates within carbohydrate degradation; 2-deoxy-D-ribose 1-phosphate degradation; D-glyceraldehyde 3-phosphate and acetaldehyde from 2-deoxy-alpha-D-ribose 1-phosphate: step 1/2. Isomerase that catalyzes the conversion of deoxy-ribose 1-phosphate (dRib-1-P) and ribose 1-phosphate (Rib-1-P) to deoxy-ribose 5-phosphate (dRib-5-P) and ribose 5-phosphate (Rib-5-P), respectively. The polypeptide is Phosphopentomutase (Shewanella pealeana (strain ATCC 700345 / ANG-SQ1)).